Reading from the N-terminus, the 211-residue chain is uncharacterized protein (211 aa).

3 helical membrane passes run 22 to 42 (FINF…GLKV), 111 to 131 (IIGA…WFPV), and 133 to 153 (GMAG…FMIT).

It to E.coli YkgB. The protein to H.influenzae HI_0219.

Its subcellular location is the cell membrane. This is an uncharacterized protein from Mannheimia haemolytica (Pasteurella haemolytica).